Consider the following 639-residue polypeptide: Sperm-associated antigen 16 protein (639 aa).

A coiled-coil region spans residues 146-218; the sequence is DVYSQVMLLE…GLKLHYASYE (73 aa). The interval 280 to 333 is disordered; sequence RESGDRAGHSCEKENSSEGPTQKSLREAREEVGYKSKLKNEKKDSEFPVDMQPD. Composition is skewed to basic and acidic residues over residues 281–295 and 303–325; these read ESGD…KENS and SLRE…KDSE. 7 WD repeats span residues 358–397, 400–439, 442–481, 484–523, 526–565, 568–608, and 609–639; these read LHEL…VLLT, GHTD…CTLT, GHNH…CRYT, GHTD…CEQS, GHMH…PIVS, VGPS…HKLV, and GHES…RLWI.

Interacts with SPAG6 and STK36. Post-translationally, phosphorylated by TSSK2. As to expression, expressed in testis.

The protein localises to the cytoplasm. It is found in the cytoskeleton. The protein resides in the cilium axoneme. Its subcellular location is the flagellum axoneme. It localises to the cell projection. The protein localises to the cilium. It is found in the flagellum. Necessary for sperm flagellar function. Plays a role in motile ciliogenesis. May help to recruit STK36 to the cilium or apical surface of the cell to initiate subsequent steps of construction of the central pair apparatus of motile cilia. This Mus musculus (Mouse) protein is Sperm-associated antigen 16 protein (Spag16).